Here is a 243-residue protein sequence, read N- to C-terminus: Venom peptide isomerase heavy chain (243 aa).

In terms of domain architecture, Peptidase S1 spans 1 to 243 (IVGGKTAKFG…YTNWMSKNMV (243 aa)). The cysteines at positions 31 and 47 are disulfide-linked. Catalysis depends on charge relay system residues histidine 46 and aspartate 96. Asparagine 127 carries N-linked (GlcNAc...) asparagine glycosylation. 2 disulfides stabilise this stretch: cysteine 159–cysteine 181 and cysteine 190–cysteine 219. The Charge relay system role is filled by serine 194.

Belongs to the peptidase S1 family. As to quaternary structure, heterodimer with venom peptide isomerase light chain; disulfide-linked. In terms of processing, N-linked glycan at Asn-127 consists of Man3-GlcNAc2-Fuc. Expressed by the venom gland.

It localises to the secreted. Its function is as follows. Peptide isomerase that inverts the chirality at the Ser-81 of omega-Aga IVB. Acts cofactor-independently. This chain is Venom peptide isomerase heavy chain, found in Agelenopsis aperta (North American funnel-web spider).